The following is a 305-amino-acid chain: Putative beta-lactamase HcpD (305 aa).

The first 27 residues, 1–27, serve as a signal peptide directing secretion; that stretch reads MIKSWTKKWFLILFLMASCFGHLVATT. TPR repeat units lie at residues 28–61, 96–133, 168–205, and 240–277; these read GEKY…RMGV, HLAC…KGGV, GISC…KDGA, and GSGC…GFSG. 7 cysteine pairs are disulfide-bonded: Cys55–Cys63, Cys91–Cys99, Cys127–Cys135, Cys163–Cys171, Cys199–Cys207, Cys235–Cys243, and Cys271–Cys279.

It belongs to the hcp beta-lactamase family.

Its subcellular location is the secreted. The enzyme catalyses a beta-lactam + H2O = a substituted beta-amino acid. In terms of biological role, may hydrolyze 6-aminopenicillinic acid and 7-aminocephalosporanic acid (ACA) derivatives. Binds to penicillin. In Helicobacter pylori (strain J99 / ATCC 700824) (Campylobacter pylori J99), this protein is Putative beta-lactamase HcpD (hcpD).